A 1057-amino-acid polypeptide reads, in one-letter code: uncharacterized protein (1057 aa).

It belongs to the IIV-6 261R/396L/443R family.

This is an uncharacterized protein from Acheta domesticus (House cricket).